Here is a 63-residue protein sequence, read N- to C-terminus: Cytochrome c oxidase subunit 7C, mitochondrial (63 aa).

The N-terminal 16 residues, 1–16, are a transit peptide targeting the mitochondrion; the sequence is MLGQSIRRFTTSVVRR. Over 17-33 the chain is Mitochondrial matrix; the sequence is SHYEEGPGKNLPFSVEN. N6-acetyllysine; alternate is present on Lys-25. Lys-25 is modified (N6-succinyllysine; alternate). The helical transmembrane segment at 34 to 60 threads the bilayer; sequence KWSLLAKMCLYFGSAFATPFLVVRHQL. The Mitochondrial intermembrane portion of the chain corresponds to 61 to 63; the sequence is LKT.

This sequence belongs to the cytochrome c oxidase VIIc family. As to quaternary structure, component of the cytochrome c oxidase (complex IV, CIV), a multisubunit enzyme composed of 14 subunits. The complex is composed of a catalytic core of 3 subunits MT-CO1, MT-CO2 and MT-CO3, encoded in the mitochondrial DNA, and 11 supernumerary subunits COX4I1 (or COX4I2), COX5A, COX5B, COX6A1 (or COX6A2), COX6B1 (or COX6B2), COX6C, COX7A2 (or COX7A1), COX7B, COX7C, COX8A and NDUFA4, which are encoded in the nuclear genome. The complex exists as a monomer or a dimer and forms supercomplexes (SCs) in the inner mitochondrial membrane with NADH-ubiquinone oxidoreductase (complex I, CI) and ubiquinol-cytochrome c oxidoreductase (cytochrome b-c1 complex, complex III, CIII), resulting in different assemblies (supercomplex SCI(1)III(2)IV(1) and megacomplex MCI(2)III(2)IV(2)). Interacts with RAB5IF.

The protein localises to the mitochondrion inner membrane. The protein operates within energy metabolism; oxidative phosphorylation. Functionally, component of the cytochrome c oxidase, the last enzyme in the mitochondrial electron transport chain which drives oxidative phosphorylation. The respiratory chain contains 3 multisubunit complexes succinate dehydrogenase (complex II, CII), ubiquinol-cytochrome c oxidoreductase (cytochrome b-c1 complex, complex III, CIII) and cytochrome c oxidase (complex IV, CIV), that cooperate to transfer electrons derived from NADH and succinate to molecular oxygen, creating an electrochemical gradient over the inner membrane that drives transmembrane transport and the ATP synthase. Cytochrome c oxidase is the component of the respiratory chain that catalyzes the reduction of oxygen to water. Electrons originating from reduced cytochrome c in the intermembrane space (IMS) are transferred via the dinuclear copper A center (CU(A)) of subunit 2 and heme A of subunit 1 to the active site in subunit 1, a binuclear center (BNC) formed by heme A3 and copper B (CU(B)). The BNC reduces molecular oxygen to 2 water molecules using 4 electrons from cytochrome c in the IMS and 4 protons from the mitochondrial matrix. This chain is Cytochrome c oxidase subunit 7C, mitochondrial (COX7C), found in Homo sapiens (Human).